The following is a 338-amino-acid chain: Sorting nexin-15 (338 aa).

Residues 1–131 (MSRRAKKDDF…EFFRGGEVTR (131 aa)) form the PX domain. Residues arginine 52, serine 54, arginine 88, and arginine 97 each coordinate a 1,2-diacyl-sn-glycero-3-phospho-(1D-myo-inositol-3-phosphate). The residue at position 106 (arginine 106) is an Omega-N-methylarginine. Residues 134-155 (EVSRDLQILPPPLIPTPPSDEA) are disordered. Residues 142 to 151 (LPPPLIPTPP) show a composition bias toward pro residues. Serine 202 and serine 228 each carry phosphoserine. A disordered region spans residues 240 to 270 (VQSKRLDQEPWEPGGREEEEAEDGDPAPAYL). Residues 266–338 (APAYLGQATE…RAETLHAHLP (73 aa)) enclose the MIT domain.

Belongs to the sorting nexin family. As to quaternary structure, homodimer. Interacts with SNX1, SNX2 and SNX4.

It localises to the cytoplasm. It is found in the membrane. Its subcellular location is the cytoplasmic vesicle membrane. Its function is as follows. May be involved in several stages of intracellular trafficking. Overexpression of SNX15 disrupts the normal trafficking of proteins from the plasma membrane to recycling endosomes or the TGN. In Rattus norvegicus (Rat), this protein is Sorting nexin-15 (Snx15).